The primary structure comprises 313 residues: uncharacterized protein (313 aa).

The next 6 membrane-spanning stretches (helical) occupy residues 16-36 (AGTW…AFLA), 106-126 (FTIL…ANEF), 155-175 (FGLL…LIFF), 208-228 (LSES…SAVF), 233-253 (LAVG…AFIA), and 286-306 (FSLV…FGIF).

Its subcellular location is the cell membrane. This is an uncharacterized protein from Bacillus subtilis (strain 168).